A 24-amino-acid polypeptide reads, in one-letter code: 47 kDa cell wall protein (24 aa).

The protein localises to the secreted. The protein resides in the cell wall. The protein is 47 kDa cell wall protein of Nicotiana tabacum (Common tobacco).